A 407-amino-acid polypeptide reads, in one-letter code: [Pyruvate dehydrogenase (acetyl-transferring)] kinase isozyme 2, mitochondrial (407 aa).

In terms of domain architecture, Histidine kinase spans 135 to 364 (LEYKDTYGDD…DAVIYLKALS (230 aa)). Residues Tyr-215 and Tyr-216 each carry the phosphotyrosine modification. ATP contacts are provided by residues 251–258 (ELFKNAMR), Asp-290, 309–310 (ST), and 325–330 (GFGYGL). The residue at position 376 (Lys-376) is an N6-succinyllysine.

The protein belongs to the PDK/BCKDK protein kinase family. In terms of assembly, homodimer, and heterodimer with PDK1. Interacts with the pyruvate dehydrogenase complex subunit DLAT, and is part of the multimeric pyruvate dehydrogenase complex that contains multiple copies of pyruvate dehydrogenase (E1), dihydrolipoamide acetyltransferase (DLAT, E2) and lipoamide dehydrogenase (DLD, E3). In terms of tissue distribution, detected in heart (at protein level).

The protein resides in the mitochondrion matrix. It catalyses the reaction L-seryl-[pyruvate dehydrogenase E1 alpha subunit] + ATP = O-phospho-L-seryl-[pyruvate dehydrogenase E1 alpha subunit] + ADP + H(+). Functionally, kinase that plays a key role in the regulation of glucose and fatty acid metabolism and homeostasis via phosphorylation of the pyruvate dehydrogenase subunits PDHA1 and PDHA2. This inhibits pyruvate dehydrogenase activity, and thereby regulates metabolite flux through the tricarboxylic acid cycle, down-regulates aerobic respiration and inhibits the formation of acetyl-coenzyme A from pyruvate. Inhibition of pyruvate dehydrogenase decreases glucose utilization and increases fat metabolism. Mediates cellular responses to insulin. Plays an important role in maintaining normal blood glucose levels and in metabolic adaptation to nutrient availability. Via its regulation of pyruvate dehydrogenase activity, plays an important role in maintaining normal blood pH and in preventing the accumulation of ketone bodies under starvation. Plays a role in the regulation of cell proliferation and in resistance to apoptosis under oxidative stress. Plays a role in p53/TP53-mediated apoptosis. This is [Pyruvate dehydrogenase (acetyl-transferring)] kinase isozyme 2, mitochondrial (Pdk2) from Mus musculus (Mouse).